The following is a 322-amino-acid chain: Aspartate carbamoyltransferase catalytic subunit (322 aa).

The carbamoyl phosphate site is built by arginine 70 and threonine 71. Position 98 (lysine 98) interacts with L-aspartate. 3 residues coordinate carbamoyl phosphate: arginine 120, histidine 150, and glutamine 153. Arginine 184 and arginine 239 together coordinate L-aspartate. The carbamoyl phosphate site is built by glycine 280 and proline 281.

This sequence belongs to the aspartate/ornithine carbamoyltransferase superfamily. ATCase family. As to quaternary structure, heterododecamer (2C3:3R2) of six catalytic PyrB chains organized as two trimers (C3), and six regulatory PyrI chains organized as three dimers (R2).

It catalyses the reaction carbamoyl phosphate + L-aspartate = N-carbamoyl-L-aspartate + phosphate + H(+). It functions in the pathway pyrimidine metabolism; UMP biosynthesis via de novo pathway; (S)-dihydroorotate from bicarbonate: step 2/3. Functionally, catalyzes the condensation of carbamoyl phosphate and aspartate to form carbamoyl aspartate and inorganic phosphate, the committed step in the de novo pyrimidine nucleotide biosynthesis pathway. The sequence is that of Aspartate carbamoyltransferase catalytic subunit from Xylella fastidiosa (strain 9a5c).